The following is a 573-amino-acid chain: NEDD4-binding protein 3-B (573 aa).

Disordered stretches follow at residues 119–138 (EFSKSSLPERGHSDKSRFGP), 173–220 (CVGS…NSYS), and 384–405 (GENEELRQKQSQSDNSGPNLED). Residues 125–135 (LPERGHSDKSR) are compositionally biased toward basic and acidic residues. Residues 186 to 196 (SNSHSNNPSES) show a composition bias toward low complexity. 2 stretches are compositionally biased toward polar residues: residues 207-220 (DSKQNSINSLNSYS) and 392-401 (KQSQSDNSGP). A coiled-coil region spans residues 287 to 474 (ESVEDVARQL…CLQALEDVKS (188 aa)).

This sequence belongs to the N4BP3 family.

The protein resides in the cytoplasmic vesicle. It is found in the cell projection. The protein localises to the axon. It localises to the dendrite. Its function is as follows. Plays a role in axon and dendrite arborization during cranial nerve development. Also important for neural crest migration and early development of other anterior structures including eye, brain and cranial cartilage. The protein is NEDD4-binding protein 3-B of Xenopus laevis (African clawed frog).